The sequence spans 235 residues: 2-C-methyl-D-erythritol 4-phosphate cytidylyltransferase (235 aa).

It belongs to the IspD/TarI cytidylyltransferase family. IspD subfamily.

The enzyme catalyses 2-C-methyl-D-erythritol 4-phosphate + CTP + H(+) = 4-CDP-2-C-methyl-D-erythritol + diphosphate. Its pathway is isoprenoid biosynthesis; isopentenyl diphosphate biosynthesis via DXP pathway; isopentenyl diphosphate from 1-deoxy-D-xylulose 5-phosphate: step 2/6. Catalyzes the formation of 4-diphosphocytidyl-2-C-methyl-D-erythritol from CTP and 2-C-methyl-D-erythritol 4-phosphate (MEP). The polypeptide is 2-C-methyl-D-erythritol 4-phosphate cytidylyltransferase (Ectopseudomonas mendocina (strain ymp) (Pseudomonas mendocina)).